We begin with the raw amino-acid sequence, 670 residues long: Carnitine O-acetyltransferase, mitochondrial (670 aa).

Residue His-378 is the Proton acceptor of the active site. Residues Lys-461 and 465–472 (KRHGMSPD) contribute to the CoA site. Residue Tyr-494 coordinates (R)-carnitine. A CoA-binding site is contributed by Ser-498. Thr-507 is a binding site for (R)-carnitine. CoA is bound at residue Gln-597. The short motif at 668-670 (AKL) is the Microbody targeting signal element.

This sequence belongs to the carnitine/choline acetyltransferase family.

The protein resides in the mitochondrion inner membrane. The protein localises to the peroxisome. The enzyme catalyses (R)-carnitine + acetyl-CoA = O-acetyl-(R)-carnitine + CoA. Functionally, carnitine acetylase is specific for short chain fatty acids. Carnitine acetylase seems to affect the flux through the pyruvate dehydrogenase complex. It may be involved as well in the transport of acetyl-CoA into mitochondria. The sequence is that of Carnitine O-acetyltransferase, mitochondrial (CAT2) from Saccharomyces cerevisiae (strain ATCC 204508 / S288c) (Baker's yeast).